Consider the following 200-residue polypeptide: Endoribonuclease YbeY (200 aa).

The segment covering 1–18 (MPADPALPDPVPPGPTAP) has biased composition (pro residues). The disordered stretch occupies residues 1–22 (MPADPALPDPVPPGPTAPVPTD). Residues His151, His155, and His161 each coordinate Zn(2+).

Belongs to the endoribonuclease YbeY family. It depends on Zn(2+) as a cofactor.

It is found in the cytoplasm. Functionally, single strand-specific metallo-endoribonuclease involved in late-stage 70S ribosome quality control and in maturation of the 3' terminus of the 16S rRNA. The sequence is that of Endoribonuclease YbeY from Rhodospirillum rubrum (strain ATCC 11170 / ATH 1.1.1 / DSM 467 / LMG 4362 / NCIMB 8255 / S1).